The chain runs to 209 residues: Uracil phosphoribosyltransferase (209 aa).

5-phospho-alpha-D-ribose 1-diphosphate is bound by residues R79, R104, and D131 to S139. Uracil contacts are provided by residues I194 and G199–A201. D200 contributes to the 5-phospho-alpha-D-ribose 1-diphosphate binding site.

The protein belongs to the UPRTase family. Mg(2+) serves as cofactor.

It carries out the reaction UMP + diphosphate = 5-phospho-alpha-D-ribose 1-diphosphate + uracil. Its pathway is pyrimidine metabolism; UMP biosynthesis via salvage pathway; UMP from uracil: step 1/1. Its activity is regulated as follows. Allosterically activated by GTP. Functionally, catalyzes the conversion of uracil and 5-phospho-alpha-D-ribose 1-diphosphate (PRPP) to UMP and diphosphate. The polypeptide is Uracil phosphoribosyltransferase (Clostridium tetani (strain Massachusetts / E88)).